The chain runs to 419 residues: UDP-N-acetylglucosamine 1-carboxyvinyltransferase 2 (419 aa).

22 to 23 (KN) provides a ligand contact to phosphoenolpyruvate. Residue arginine 92 participates in UDP-N-acetyl-alpha-D-glucosamine binding. The Proton donor role is filled by cysteine 116. At cysteine 116 the chain carries 2-(S-cysteinyl)pyruvic acid O-phosphothioketal. Residues 121–125 (RPIDL), aspartate 306, and isoleucine 328 each bind UDP-N-acetyl-alpha-D-glucosamine.

This sequence belongs to the EPSP synthase family. MurA subfamily.

The protein localises to the cytoplasm. The enzyme catalyses phosphoenolpyruvate + UDP-N-acetyl-alpha-D-glucosamine = UDP-N-acetyl-3-O-(1-carboxyvinyl)-alpha-D-glucosamine + phosphate. It participates in cell wall biogenesis; peptidoglycan biosynthesis. In terms of biological role, cell wall formation. Adds enolpyruvyl to UDP-N-acetylglucosamine. The chain is UDP-N-acetylglucosamine 1-carboxyvinyltransferase 2 from Streptococcus pyogenes serotype M1.